The primary structure comprises 354 residues: Peptide chain release factor 1 (354 aa).

Residue Gln-232 is modified to N5-methylglutamine.

Belongs to the prokaryotic/mitochondrial release factor family. In terms of processing, methylated by PrmC. Methylation increases the termination efficiency of RF1.

The protein resides in the cytoplasm. Peptide chain release factor 1 directs the termination of translation in response to the peptide chain termination codons UAG and UAA. The chain is Peptide chain release factor 1 from Jannaschia sp. (strain CCS1).